Here is an 84-residue protein sequence, read N- to C-terminus: Cell division topological specificity factor (84 aa).

This sequence belongs to the MinE family.

Functionally, prevents the cell division inhibition by proteins MinC and MinD at internal division sites while permitting inhibition at polar sites. This ensures cell division at the proper site by restricting the formation of a division septum at the midpoint of the long axis of the cell. This chain is Cell division topological specificity factor, found in Paraburkholderia phytofirmans (strain DSM 17436 / LMG 22146 / PsJN) (Burkholderia phytofirmans).